A 133-amino-acid chain; its full sequence is Classical arabinogalactan protein 5 (133 aa).

The N-terminal stretch at 1-21 is a signal peptide; it reads MASKSVVVFLFLALVASSVVA. Pyrrolidone carboxylic acid is present on Q22. The tract at residues 23 to 110 is disordered; that stretch reads APGPAPTISP…QSPLSGSPNA (88 aa). The segment covering 25 to 37 has biased composition (pro residues); the sequence is GPAPTISPLPATP. The segment covering 38–48 has biased composition (low complexity); that stretch reads TPSQSPRATAP. Residues 49 to 81 show a composition bias toward pro residues; the sequence is APSPSANPPPSAPTTAPPVSQPPTESPPAPPTS. N109 carries GPI-anchor amidated asparagine lipidation. A propeptide spans 110–133 (removed in mature form); it reads AAAVSRVSLVGTFAGVAVIAALLL.

The protein belongs to the classical AGP family. O-glycosylated on the hydroxyproline residues. As to expression, expressed at a low level in flowers and siliques.

The protein localises to the cell membrane. Its function is as follows. Proteoglycan that seems to be implicated in diverse developmental roles such as differentiation, cell-cell recognition, embryogenesis and programmed cell death. This is Classical arabinogalactan protein 5 (AGP5) from Arabidopsis thaliana (Mouse-ear cress).